The chain runs to 164 residues: UPF0114 protein Avin_40830 (164 aa).

4 consecutive transmembrane segments (helical) span residues 15–35, 53–73, 103–125, and 136–156; these read LLAPIYIGLSVALLALTLKFF, LILVLLSMIDMALVGGLLVMV, GSLKLKVAASIVAISSIHLLRVF, and LLWYVLIHMTFVVSAFVMSYL.

The protein belongs to the UPF0114 family.

It localises to the cell membrane. The polypeptide is UPF0114 protein Avin_40830 (Azotobacter vinelandii (strain DJ / ATCC BAA-1303)).